A 3907-amino-acid polypeptide reads, in one-letter code: Cyclo-acetoacetyl-L-tryptophan synthase (3907 aa).

One can recognise a Ketosynthase family 3 (KS3) domain in the interval 2 to 436 (KTPIAVVGTA…GTNAHAIIES (435 aa)). Residues cysteine 176, histidine 313, and histidine 356 each act as for beta-ketoacyl synthase activity in the active site. The tract at residues 555–870 (IFTGQGAQWA…SLLRRGQNDL (316 aa)) is malonyl-CoA:ACP transacylase (MAT) domain. The interval 937-1074 (HPLLGRRSAD…ARLTLHLGDA (138 aa)) is N-terminal hotdog fold. A dehydratase (DH) domain region spans residues 937 to 1236 (HPLLGRRSAD…GLVMKSVPQP (300 aa)). The PKS/mFAS DH domain occupies 937-1239 (HPLLGRRSAD…MKSVPQPDTS (303 aa)). Residues 1092-1239 (LAPVDVADLY…MKSVPQPDTS (148 aa)) form a C-terminal hotdog fold region. The segment at 1386 to 1573 (AAMFSQLSKD…FSGIDHIFHD (188 aa)) is methyltransferase (MT) domain. A ketoreductase (KR)domain region spans residues 2064 to 2238 (GTYFMIDMAT…VGSVMALGMV (175 aa)). The tract at residues 2324 to 2352 (TKEGQYAEQEDSPSLLVPDEQLQESGPGR) is disordered. Residues 2356–2430 (DDLLARLSGK…LCEKAVPKPN (75 aa)) form the Carrier 1 domain. Serine 2390 carries the post-translational modification O-(pantetheine 4'-phosphoryl)serine. A condensation region spans residues 2504–2926 (MSPHQSQIWF…SSNPLISVQS (423 aa)). Residues 2959 to 3359 (FQDMVDQYGD…GSLILLGRMD (401 aa)) form an adenylation region. In terms of domain architecture, Carrier 2 spans 3474–3549 (KRLTLGEGEL…QMALKVDARK (76 aa)). An O-(pantetheine 4'-phosphoryl)serine modification is found at serine 3509. Residues 3594-3813 (LTGSTSFLGR…DFQKVEIIAE (220 aa)) are reductase (RED) domain.

In the C-terminal section; belongs to the NRP synthetase family.

It catalyses the reaction L-tryptophan + malonyl-CoA + acetyl-CoA = cyclo-acetoacetyl-L-tryptophan + CO2 + 2 CoA + H2O. It functions in the pathway secondary metabolite biosynthesis. Functionally, hybrid PKS-NRPS synthetase; part of the gene cluster that mediates the biosynthesis of the fungal neurotoxin cyclopiazonic acid (CPA), a nanomolar inhibitor of Ca(2+)-ATPase with a unique pentacyclic indole tetramic acid scaffold. The hybrid two module polyketide synthase-nonribosomal peptide synthetase (PKS-NRPS) cpaS incorporates acetyl-CoA, malonyl-CoA, and tryptophan (Trp) and utilizes a C-terminal redox-incompetent reductase domain to make and release the tryptophan tetramic acid, cyclo-acetoacetyl-L-tryptophan (c-AATrp), as the first intermediate in the pathway. CpaS catalyzes a Dieckmann-type cyclization on the N-acetoacetyl-Trp intermediate bound in thioester linkage to the phosphopantetheinyl arm of the T domain to form and release c-AATrp. CpaD then regiospecifically dimethylallylates c-AATrp to form beta-cyclopiazonic acid. CpaD discriminates against free Trp but accepts tryptophan-containing thiohydantoins, diketopiperazines, and linear peptides as substrates for C4-prenylation and also acts as regiospecific O-dimethylallyltransferase (DMAT) on a tyrosine-derived tetramic acid. The beta-cyclopiazonate dehydrogenase cpaO then carries out the dehydrogenation of beta-CPA to yield an unstable enimine product, which is captured by intramolecular cyclization to create the pentacyclic fused scaffold of alpha-cyclopiazonate. Finally, the cytochrome P450 monooxygenase cpaH mediates the conversion of CPA into the less toxic 2-oxocyclopiazonic acid, the end product of the CPA pathway in A.oryza. This Aspergillus oryzae (Yellow koji mold) protein is Cyclo-acetoacetyl-L-tryptophan synthase.